We begin with the raw amino-acid sequence, 209 residues long: MGRRKRRPGSRRWLDEHHSDHWVQQAQKAGYRSRAAFKLLEIQEKDRLIRPGMTVVDLGAAPGGWCQVAAELVGDRGAVFALDILPMEALPGVHVIQGDFTEEAPLQALLQALEGRPVDLVLSDMAPNLSGVRVVDQPRAMYLAELALDFAGQVLQPGGDFLTKVFHGEGLDDYRRDLQRQFSKVITRKPRASRARSRESYLLARGFGL.

Positions 63, 65, 83, 99, and 124 each coordinate S-adenosyl-L-methionine. The active-site Proton acceptor is Lys-164.

The protein belongs to the class I-like SAM-binding methyltransferase superfamily. RNA methyltransferase RlmE family.

The protein resides in the cytoplasm. The catalysed reaction is uridine(2552) in 23S rRNA + S-adenosyl-L-methionine = 2'-O-methyluridine(2552) in 23S rRNA + S-adenosyl-L-homocysteine + H(+). Functionally, specifically methylates the uridine in position 2552 of 23S rRNA at the 2'-O position of the ribose in the fully assembled 50S ribosomal subunit. The protein is Ribosomal RNA large subunit methyltransferase E of Alkalilimnicola ehrlichii (strain ATCC BAA-1101 / DSM 17681 / MLHE-1).